A 449-amino-acid polypeptide reads, in one-letter code: Phosphoglucosamine mutase (449 aa).

Serine 100 acts as the Phosphoserine intermediate in catalysis. Serine 100, aspartate 241, aspartate 243, and aspartate 245 together coordinate Mg(2+). The residue at position 100 (serine 100) is a Phosphoserine.

It belongs to the phosphohexose mutase family. Mg(2+) is required as a cofactor. Post-translationally, activated by phosphorylation.

The catalysed reaction is alpha-D-glucosamine 1-phosphate = D-glucosamine 6-phosphate. Functionally, catalyzes the conversion of glucosamine-6-phosphate to glucosamine-1-phosphate. This chain is Phosphoglucosamine mutase, found in Caldicellulosiruptor bescii (strain ATCC BAA-1888 / DSM 6725 / KCTC 15123 / Z-1320) (Anaerocellum thermophilum).